Consider the following 108-residue polypeptide: UPF0145 protein Ava_0420 (108 aa).

The protein belongs to the UPF0145 family.

In Trichormus variabilis (strain ATCC 29413 / PCC 7937) (Anabaena variabilis), this protein is UPF0145 protein Ava_0420.